The following is a 361-amino-acid chain: Velvet complex subunit B (361 aa).

2 disordered regions span residues 1 to 36 (MYAV…SLRQ) and 308 to 340 (NGAP…VLLR). Over residues 23–35 (PSVQYPSGTTSLR) the composition is skewed to polar residues. In terms of domain architecture, Velvet spans 47–353 (QDGRSWSLQV…SASALRYRVS (307 aa)). The segment covering 323–336 (SLNPSRSSPPKSSP) has biased composition (low complexity).

Belongs to the velvet family. VelB subfamily. As to quaternary structure, component of the heterotrimeric velvet complex composed of laeA, veA and velB; VeA acting as a bridging protein between laeA and velB. Interacts with velA. Forms a heterodimeric complex with vosA; the formation of the velB-vosA complex is light-dependent. Interacts with vosA.

The protein localises to the nucleus. The protein resides in the cytoplasm. Its function is as follows. Component of the velvet transcription factor complex that controls sexual/asexual developmental ratio in response to light, promoting sexual development in the darkness while stimulating asexual sporulation under illumination. The velvet complex acts as a global regulator for secondary metabolite gene expression. Component of the velB-VosA heterodimeric complex that plays a dual role in activating genes associated with spore maturation and repressing certain development-associated genes. The velB-VosA complex binds DNA through the DNA-binding domain of vosA that recognizes an 11-nucleotide consensus sequence 5'-CTGGCCGCGGC-3' consisting of two motifs in the promoters of key developmental regulatory genes. Controls conidiophore formation. This chain is Velvet complex subunit B, found in Penicillium rubens (strain ATCC 28089 / DSM 1075 / NRRL 1951 / Wisconsin 54-1255) (Penicillium chrysogenum).